We begin with the raw amino-acid sequence, 112 residues long: Ig kappa chain V-III region PC 7132 (112 aa).

The interval 1–23 (DIVLTQSPASLAVSLGQRATISC) is framework-1. The cysteines at positions 23 and 92 are disulfide-linked. Residues 24 to 38 (RASESVDNYGISFMN) form a complementarity-determining-1 region. The interval 39 to 53 (WFQQKPGQPPKLLIY) is framework-2. The tract at residues 54 to 60 (AASNQGS) is complementarity-determining-2. The tract at residues 61-92 (GVPARFSGSGSGTDFSLNIHPMEEDDTAMYFC) is framework-3. The interval 93–102 (QQSKEVPPYT) is complementarity-determining-3. Residues 103 to 112 (FGGGTKLEIK) form a framework-4 region.

This is Ig kappa chain V-III region PC 7132 from Mus musculus (Mouse).